A 90-amino-acid polypeptide reads, in one-letter code: Small ribosomal subunit protein bS18 (90 aa).

The interval 1-24 (MKPMRQKPGRGQGNKSISNALASK) is disordered.

It belongs to the bacterial ribosomal protein bS18 family. Part of the 30S ribosomal subunit. Forms a tight heterodimer with protein bS6.

Its function is as follows. Binds as a heterodimer with protein bS6 to the central domain of the 16S rRNA, where it helps stabilize the platform of the 30S subunit. The protein is Small ribosomal subunit protein bS18 of Chlorobium phaeovibrioides (strain DSM 265 / 1930) (Prosthecochloris vibrioformis (strain DSM 265)).